A 758-amino-acid polypeptide reads, in one-letter code: 5-methyltetrahydropteroyltriglutamate--homocysteine methyltransferase (758 aa).

5-methyltetrahydropteroyltri-L-glutamate is bound by residues 17–20 and lysine 117; that span reads RELK. L-homocysteine-binding positions include 434 to 436 and glutamate 487; that span reads IGS. L-methionine-binding positions include 434 to 436 and glutamate 487; that span reads IGS. Residues 518 to 519 and tryptophan 564 each bind 5-methyltetrahydropteroyltri-L-glutamate; that span reads RC. Residue aspartate 602 coordinates L-homocysteine. L-methionine is bound at residue aspartate 602. Residue glutamate 608 participates in 5-methyltetrahydropteroyltri-L-glutamate binding. Positions 644, 646, and 668 each coordinate Zn(2+). The Proton donor role is filled by histidine 697. Residue cysteine 729 coordinates Zn(2+).

This sequence belongs to the vitamin-B12 independent methionine synthase family. Zn(2+) serves as cofactor.

It carries out the reaction 5-methyltetrahydropteroyltri-L-glutamate + L-homocysteine = tetrahydropteroyltri-L-glutamate + L-methionine. It participates in amino-acid biosynthesis; L-methionine biosynthesis via de novo pathway; L-methionine from L-homocysteine (MetE route): step 1/1. Catalyzes the transfer of a methyl group from 5-methyltetrahydrofolate to homocysteine resulting in methionine formation. In Photorhabdus laumondii subsp. laumondii (strain DSM 15139 / CIP 105565 / TT01) (Photorhabdus luminescens subsp. laumondii), this protein is 5-methyltetrahydropteroyltriglutamate--homocysteine methyltransferase.